A 729-amino-acid polypeptide reads, in one-letter code: Bromo and FHA domain-containing protein DDB_G0267958 (729 aa).

The span at Leu46–Thr79 shows a compositional bias: low complexity. The interval Leu46–Ala83 is disordered. Residues Leu112–Phe167 form the FHA domain. 3 stretches are compositionally biased toward low complexity: residues Ile208–Ile221, Pro229–Thr275, and Pro283–Lys306. Disordered stretches follow at residues Ile208 to Lys361 and Ser403 to Pro442. Over residues Asp310–Val341 the composition is skewed to acidic residues. The stretch at Asp315–Lys352 forms a coiled coil. Low complexity predominate over residues Pro406 to Lys431. The region spanning Ser498 to Ser617 is the Bromo domain. A coiled-coil region spans residues Ser659 to Asp718. Positions Ser659–Gln729 are disordered. Over residues Gln668–Gln729 the composition is skewed to acidic residues.

The sequence is that of Bromo and FHA domain-containing protein DDB_G0267958 from Dictyostelium discoideum (Social amoeba).